Here is a 215-residue protein sequence, read N- to C-terminus: Protein C' (215 aa).

Residues 12 to 34 form a disordered region; it reads MPSFLKKILKLRGRRQEDESRSR. An involved in self-degradation and in host STAT1 degradation region spans residues 15–22; the sequence is FLKKILKL.

The protein belongs to the respirovirus protein C family. As to quaternary structure, the different isoforms interact (via C-terminus) with unphosphorylated and phosphorylated human STAT1 (via N-terminus), favoring the formation of parallel STAT1 homodimers. The different isoforms do not interact with host STAT2. C protein interacts with L protein; this interaction has an inhibitory effect on viral transcription and replication. Post-translationally, protein Y2 is produced not only by alternative initiation, but also by proteolytic cleavage of C'. Only alternative initiation is detected in vitro, whereas in vivo cleavage seems to be predominant.

The protein resides in the host cytoplasm. Functionally, the different products prevent the establishment of cellular antiviral state by blocking the interferon-alpha/beta (IFN-alpha/beta) and IFN-gamma signaling pathways. They inhibit IFN-alpha/beta induced tyrosine phosphorylation of STAT1 and STAT2. Blocking the IFN-alpha/beta pathway requires binding to STAT1 in the cytoplasm. They inhibit IFN-gamma induced serine phosphorylation of STAT1. Block the IFN-gamma pathway by binding to and stabilizing the parallel form of the STAT1 dimer, further inducing high-molecular-weight complex formation and inhibition of transcription by IFN-gamma. May also have a role in preventing the cell to enter apoptosis. Modulate regulation of viral transcription and replication. Overexpression inhibits the viral RNA polymerase. The absence of all C', C and Y2 proteins leads to viral delayed growth. Plays an important role in virion particles release. Modulates virion shape. The sequence is that of Protein C' (P/V/C) from Cavia cutleri (Guinea pig).